We begin with the raw amino-acid sequence, 574 residues long: R-linalool synthase, chloroplastic (574 aa).

The transit peptide at 1 to 40 (MSCARITVTLPYRSAKTSIQRGITHCPALLRPRFSACTPL) directs the protein to the chloroplast. The segment covering 52 to 61 (INGDNSPLKN) has biased composition (polar residues). Residues 52-71 (INGDNSPLKNTHQHVEERSS) form a disordered region. The (2E)-geranyl diphosphate site is built by Arg287, Asp324, Asp328, Arg467, and Asp470. Mg(2+) contacts are provided by Asp324 and Asp328. The DDXXD motif motif lies at 324–328 (DDIFD). Mg(2+) is bound by residues Asp470, Thr474, and Glu478.

The protein belongs to the terpene synthase family. Tpsb subfamily. The cofactor is Mg(2+). Mn(2+) serves as cofactor.

It is found in the plastid. The protein resides in the chloroplast. The catalysed reaction is (2E)-geranyl diphosphate + H2O = (R)-linalool + diphosphate. It participates in secondary metabolite biosynthesis; terpenoid biosynthesis. In terms of biological role, monoterpene synthase that catalyzes the formation of (3R)-linalool from geranyl diphosphate. The sequence is that of R-linalool synthase, chloroplastic (LIS) from Ocimum basilicum (Sweet basil).